Reading from the N-terminus, the 215-residue chain is FMN-dependent NADH:quinone oxidoreductase (215 aa).

17–19 (SAS) contacts FMN.

Belongs to the azoreductase type 1 family. As to quaternary structure, homodimer. The cofactor is FMN.

It catalyses the reaction 2 a quinone + NADH + H(+) = 2 a 1,4-benzosemiquinone + NAD(+). It carries out the reaction N,N-dimethyl-1,4-phenylenediamine + anthranilate + 2 NAD(+) = 2-(4-dimethylaminophenyl)diazenylbenzoate + 2 NADH + 2 H(+). Functionally, quinone reductase that provides resistance to thiol-specific stress caused by electrophilic quinones. Also exhibits azoreductase activity. Catalyzes the reductive cleavage of the azo bond in aromatic azo compounds to the corresponding amines. The protein is FMN-dependent NADH:quinone oxidoreductase of Clostridium botulinum (strain Eklund 17B / Type B).